Here is a 226-residue protein sequence, read N- to C-terminus: MADSRPDPESEPDSVFPREVGLFADCYSEKSRFCFCGHVLNITENFGSRLGVAARVWDAALSLCNYFESQNVDFRGKKVIELGAGTGIVGILAALQGGDVTITDLPLVLEQIQGNVQANVPPGGRAQVRALSWGIDQHVFPGDYDLVLGADIVYLEPTFPLLLGTLRHLCGPHGTIYLASKMREEHGTESFFQHLLPQHFQLELAQRDEDENVNIYRARHRGPRPA.

S-adenosyl-L-methionine is bound by residues Trp-57, 83–85 (GAG), Asp-104, Trp-133, and Ala-150.

It belongs to the methyltransferase superfamily. METTL21 family. In terms of assembly, interacts with members of the heat shock protein 70 and 90 families and of the TCP-1 chaperonin family, as well as with HSPD1, STIP1 and tubulin; at least some of these proteins may be methylation substrates.

The protein localises to the cytoplasm. It is found in the cytoskeleton. The protein resides in the microtubule organizing center. It localises to the centrosome. The enzyme catalyses L-lysyl-[protein] + 3 S-adenosyl-L-methionine = N(6),N(6),N(6)-trimethyl-L-lysyl-[protein] + 3 S-adenosyl-L-homocysteine + 3 H(+). It catalyses the reaction L-lysyl-[protein] + S-adenosyl-L-methionine = N(6)-methyl-L-lysyl-[protein] + S-adenosyl-L-homocysteine + H(+). The catalysed reaction is N(6)-methyl-L-lysyl-[protein] + S-adenosyl-L-methionine = N(6),N(6)-dimethyl-L-lysyl-[protein] + S-adenosyl-L-homocysteine + H(+). It carries out the reaction N(6),N(6)-dimethyl-L-lysyl-[protein] + S-adenosyl-L-methionine = N(6),N(6),N(6)-trimethyl-L-lysyl-[protein] + S-adenosyl-L-homocysteine + H(+). In terms of biological role, protein-lysine methyltransferase that selectively mono-, di- and trimethylates 'Lys-165' of the translation elongation factors EEF1A1 and EEF1A2 in an aminoacyl-tRNA and GTP-dependent manner. EEF1A1 methylation by EEF1AKMT3 is dynamic as well as inducible by stress conditions, such as ER-stress, and plays a regulatory role on mRNA translation. The sequence is that of EEF1A lysine methyltransferase 3 from Bos taurus (Bovine).